The chain runs to 96 residues: Fruit-specific protein (96 aa).

3 cysteine pairs are disulfide-bonded: C59–C75, C63–C78, and C69–C92.

In terms of tissue distribution, fruit specific.

This chain is Fruit-specific protein (2A11), found in Solanum lycopersicum (Tomato).